We begin with the raw amino-acid sequence, 618 residues long: Transcriptional regulator CPUR_05421 (618 aa).

Positions 14–41 form a DNA-binding region, zn(2)-C6 fungal-type; sequence CSHLVGREIGCSRDLAGCRRCTSEGRAC. A disordered region spans residues 52–87; sequence TRRRNRANQDVTRSALYSSNTTPQTISDQATGRPCE. Residues 59–81 show a composition bias toward polar residues; that stretch reads NQDVTRSALYSSNTTPQTISDQA.

It localises to the nucleus. In terms of biological role, transcriptional regulator; part of the ergochrome gene cluster responsible for the typical purple-black color of the ergot sclerotia. The ergochrome gene cluster produces several ergot pigments including the yellow ergochrome secalonic acid and its derivatives, as well as the red anthraquinones endocrocin and clavorubin. In Claviceps purpurea (strain 20.1) (Ergot fungus), this protein is Transcriptional regulator CPUR_05421.